A 213-amino-acid chain; its full sequence is MELHVLNHPLVEHKLTVLRDKNTPSSIFRELVSELVMLEAYEATRNLSVVAAPIETPVAPMTGKKLAEPRPIIVPVLRAGLGMLDGMTRLMPTAEVGFLGMKRDEEHPTQQVTYANRLPEDLSGRQCFLIDPMLATGGTLVAATHYLAERGAKDVTAINIIAAPEGIKYVEEHIDPSIEFKVVVCAVDEKLNDKCYIVPGLGDAGDRLYGVID.

Residues Arg78, Arg103, and 131–139 each bind 5-phospho-alpha-D-ribose 1-diphosphate; that span reads DPMLATGGT. Residues Ile197 and 202-204 each bind uracil; that span reads GDA. 5-phospho-alpha-D-ribose 1-diphosphate is bound at residue Asp203.

Belongs to the UPRTase family. Mg(2+) serves as cofactor.

It catalyses the reaction UMP + diphosphate = 5-phospho-alpha-D-ribose 1-diphosphate + uracil. Its pathway is pyrimidine metabolism; UMP biosynthesis via salvage pathway; UMP from uracil: step 1/1. Its activity is regulated as follows. Allosterically activated by GTP. Catalyzes the conversion of uracil and 5-phospho-alpha-D-ribose 1-diphosphate (PRPP) to UMP and diphosphate. The polypeptide is Uracil phosphoribosyltransferase (Bifidobacterium longum subsp. infantis (strain ATCC 15697 / DSM 20088 / JCM 1222 / NCTC 11817 / S12)).